We begin with the raw amino-acid sequence, 379 residues long: tRNA-specific 2-thiouridylase MnmA (379 aa).

ATP contacts are provided by residues 6-13 and Leu32; that span reads AMSGGVDS. The active-site Nucleophile is Cys101. Residues Cys101 and Cys199 are joined by a disulfide bond. Gly125 is a binding site for ATP. Positions 148 to 150 are interaction with tRNA; the sequence is KDQ. The active-site Cysteine persulfide intermediate is the Cys199.

It belongs to the MnmA/TRMU family.

The protein resides in the cytoplasm. The enzyme catalyses S-sulfanyl-L-cysteinyl-[protein] + uridine(34) in tRNA + AH2 + ATP = 2-thiouridine(34) in tRNA + L-cysteinyl-[protein] + A + AMP + diphosphate + H(+). Its function is as follows. Catalyzes the 2-thiolation of uridine at the wobble position (U34) of tRNA, leading to the formation of s(2)U34. The protein is tRNA-specific 2-thiouridylase MnmA of Paenarthrobacter aurescens (strain TC1).